Consider the following 341-residue polypeptide: HTH-type transcriptional repressor PurR (341 aa).

In terms of domain architecture, HTH lacI-type spans 2 to 56 (ATIKDVAKRANVSTTTVSHVINKTRFVAEETRNAVWAAIKELHYSPSAVARSLKV). The segment at residues 4-23 (IKDVAKRANVSTTTVSHVIN) is a DNA-binding region (H-T-H motif). Residues 48–56 (SAVARSLKV) mediate DNA binding. Positions 73, 190, 192, 221, and 275 each coordinate hypoxanthine.

As to quaternary structure, homodimer.

Its pathway is purine metabolism; purine nucleotide biosynthesis [regulation]. Is the main repressor of the genes involved in the de novo synthesis of purine nucleotides, regulating purB, purC, purEK, purF, purHD, purL, purMN and guaBA expression. PurR is allosterically activated to bind its cognate DNA by binding the purine corepressors, hypoxanthine or guanine, thereby effecting transcription repression. This chain is HTH-type transcriptional repressor PurR, found in Salmonella arizonae (strain ATCC BAA-731 / CDC346-86 / RSK2980).